We begin with the raw amino-acid sequence, 290 residues long: 4-hydroxy-tetrahydrodipicolinate synthase (290 aa).

A pyruvate-binding site is contributed by Thr45. The Proton donor/acceptor role is filled by Tyr133. The active-site Schiff-base intermediate with substrate is the Lys161. Position 203 (Ile203) interacts with pyruvate.

The protein belongs to the DapA family. In terms of assembly, homotetramer; dimer of dimers.

It is found in the cytoplasm. The catalysed reaction is L-aspartate 4-semialdehyde + pyruvate = (2S,4S)-4-hydroxy-2,3,4,5-tetrahydrodipicolinate + H2O + H(+). It functions in the pathway amino-acid biosynthesis; L-lysine biosynthesis via DAP pathway; (S)-tetrahydrodipicolinate from L-aspartate: step 3/4. Catalyzes the condensation of (S)-aspartate-beta-semialdehyde [(S)-ASA] and pyruvate to 4-hydroxy-tetrahydrodipicolinate (HTPA). The protein is 4-hydroxy-tetrahydrodipicolinate synthase of Cellvibrio japonicus (strain Ueda107) (Pseudomonas fluorescens subsp. cellulosa).